The following is a 458-amino-acid chain: Tissue-resident T-cell transcription regulator protein ZNF683 (458 aa).

Disordered stretches follow at residues 84-109 and 249-275; these read PQDL…TDSE and TLHS…APTR. 3 consecutive C2H2-type zinc fingers follow at residues 301–323, 329–351, and 357–379; these read YECN…LRVH, FQCA…HLVH, and HQCQ…LRLH.

It belongs to the krueppel C2H2-type zinc-finger protein family. As to expression, expressed in tissue-resident memory T (Trm) cell population in non-lymphoid organs, such as skin and gut. Expressed in innate lymphocytes, including tissue-resident natural killer (trNK) and natural killer T (NKT) cells in thymus, spleen and liver.

The protein localises to the nucleus. Functionally, transcription factor that mediates a transcriptional program in various innate and adaptive immune tissue-resident lymphocyte T-cell types such as tissue-resident memory T (Trm), natural killer (trNK) and natural killer T (NKT) cells and negatively regulates gene expression of proteins that promote the egress of tissue-resident T-cell populations from non-lymphoid organs. Plays a role in the development, retention and long-term establishment of adaptive and innate tissue-resident lymphocyte T-cell types in non-lymphoid organs, such as the skin and gut, but also in other nonbarrier tissues like liver and kidney, and therefore may provide immediate immunological protection against reactivating infections or viral reinfection. Also plays a role in the differentiation of both thymic and peripheral NKT cells. Negatively regulates the accumulation of interferon-gamma (IFN-gamma) in NKT cells at steady state or after antigenic stimulation. Positively regulates granzyme B production in NKT cells after innate stimulation. Associates with the transcriptional repressor PRDM1/BLIMP1 to chromatin at gene promoter regions. The sequence is that of Tissue-resident T-cell transcription regulator protein ZNF683 from Mus musculus (Mouse).